We begin with the raw amino-acid sequence, 229 residues long: Putative N-acetylmannosamine-6-phosphate 2-epimerase 2 (229 aa).

It belongs to the NanE family.

The enzyme catalyses an N-acyl-D-glucosamine 6-phosphate = an N-acyl-D-mannosamine 6-phosphate. It participates in amino-sugar metabolism; N-acetylneuraminate degradation; D-fructose 6-phosphate from N-acetylneuraminate: step 3/5. Converts N-acetylmannosamine-6-phosphate (ManNAc-6-P) to N-acetylglucosamine-6-phosphate (GlcNAc-6-P). The chain is Putative N-acetylmannosamine-6-phosphate 2-epimerase 2 (nanE2) from Salmonella typhimurium (strain LT2 / SGSC1412 / ATCC 700720).